Reading from the N-terminus, the 348-residue chain is Guanine nucleotide-binding protein alpha-13 subunit (348 aa).

A lipid anchor (N-myristoyl glycine) is attached at G2. A lipid anchor (S-palmitoyl cysteine) is attached at C3. A G-alpha domain is found at 34–348; the sequence is SHIRLLLLGS…VFKDIAKRKK (315 aa). The interval 37–50 is G1 motif; the sequence is RLLLLGSAESGKTT. GTP contacts are provided by residues 42–49, 176–182, 201–205, 270–273, and A326; these read GSAESGKT, IMAYVPT, DIGGQ, and NEID. Positions 174–182 are G2 motif; sequence DLIMAYVPT. T182 contacts Mg(2+). The tract at residues 197–206 is G3 motif; that stretch reads FQLFDIGGQK. The segment at 266-273 is G4 motif; that stretch reads YLFLNEID. The tract at residues 324 to 329 is G5 motif; the sequence is CIAIDT.

This sequence belongs to the G-alpha family. As to quaternary structure, g proteins are composed of 3 units; alpha, beta and gamma. The alpha chain contains the guanine nucleotide binding site.

Functionally, guanine nucleotide-binding proteins (G proteins) are involved as modulators or transducers in various transmembrane signaling systems. This Caenorhabditis elegans protein is Guanine nucleotide-binding protein alpha-13 subunit (gpa-13).